The primary structure comprises 325 residues: Peroxidase 45 (325 aa).

The N-terminal stretch at 1 to 25 is a signal peptide; the sequence is MEKNTSQTIFSNFFLLLLLSSCVSA. 4 cysteine pairs are disulfide-bonded: Cys-36/Cys-115, Cys-69/Cys-74, Cys-121/Cys-321, and Cys-200/Cys-232. His-67 acts as the Proton acceptor in catalysis. Ca(2+)-binding residues include Asp-68, Val-71, Gly-73, Asp-75, and Ser-77. Pro-163 provides a ligand contact to substrate. His-193 contributes to the heme b binding site. A Ca(2+)-binding site is contributed by Thr-194. Asp-245, Ser-248, and Asp-253 together coordinate Ca(2+).

This sequence belongs to the peroxidase family. Classical plant (class III) peroxidase subfamily. Heme b serves as cofactor. Requires Ca(2+) as cofactor. In terms of tissue distribution, slightly expressed in roots.

The protein resides in the secreted. It catalyses the reaction 2 a phenolic donor + H2O2 = 2 a phenolic radical donor + 2 H2O. In terms of biological role, removal of H(2)O(2), oxidation of toxic reductants, biosynthesis and degradation of lignin, suberization, auxin catabolism, response to environmental stresses such as wounding, pathogen attack and oxidative stress. These functions might be dependent on each isozyme/isoform in each plant tissue. This Arabidopsis thaliana (Mouse-ear cress) protein is Peroxidase 45 (PER45).